We begin with the raw amino-acid sequence, 531 residues long: MSKVDVKIGADSISSSDEILVPSRLADVTLAFMEENDAAVPEITPEQEKKLKRKLFLTIFTFVSAINLLLYMDKATLSYDSILGFFEDTGLTQNTYNTVNTLFYVGFAIGQFPGQYLAQKLPLGKFLGGLLATWTILIFLSCTAYNFSGVVALRFFLGLTESVVIPILITTMGMFFDASERAAAQPFFFAACMGSPIPTGFIAYGVLHITNPSISLWKIFTIIIGGLTFIMTVVVILWFPNNPADVKFFSIQERVWIIRRVQASTGSSIEQKVFKKSQFREAMKDYITWLFGLFFLLQQLANNLPYQQNLLFEGMGGVDALGSTLVSVAGAGFAVVCAFIATLMLAKWKNISALTAIFWTLPALVGSIAAAALPWDNKIGILANICMAGQIFGIPFIIALSWASSSASGYTKKLTRSSVSLFAMGIANIISPQIWREKDSPRFLPAWIVQIVLSFSLAPAILLLIHFILKRRNNQRLKNYDENLQNYLDRIQLIESENPSSIEEGKVVTHENNLAVFDLTDLENETFIYPL.

At 1 to 54 (MSKVDVKIGADSISSSDEILVPSRLADVTLAFMEENDAAVPEITPEQEKKLKRK) the chain is on the cytoplasmic side. A helical membrane pass occupies residues 55 to 75 (LFLTIFTFVSAINLLLYMDKA). Residues 76-97 (TLSYDSILGFFEDTGLTQNTYN) lie on the Lumenal side of the membrane. Residues 98–118 (TVNTLFYVGFAIGQFPGQYLA) traverse the membrane as a helical segment. Over 119-120 (QK) the chain is Cytoplasmic. The chain crosses the membrane as a helical span at residues 121-141 (LPLGKFLGGLLATWTILIFLS). Over 142-154 (CTAYNFSGVVALR) the chain is Lumenal. Asn-146 carries N-linked (GlcNAc...) asparagine glycosylation. The helical transmembrane segment at 155–175 (FFLGLTESVVIPILITTMGMF) threads the bilayer. Over 176-186 (FDASERAAAQP) the chain is Cytoplasmic. A helical membrane pass occupies residues 187–207 (FFFAACMGSPIPTGFIAYGVL). The Lumenal segment spans residues 208–218 (HITNPSISLWK). A helical transmembrane segment spans residues 219 to 239 (IFTIIIGGLTFIMTVVVILWF). The Cytoplasmic portion of the chain corresponds to 240–285 (PNNPADVKFFSIQERVWIIRRVQASTGSSIEQKVFKKSQFREAMKD). Residues 286 to 306 (YITWLFGLFFLLQQLANNLPY) form a helical membrane-spanning segment. The Lumenal segment spans residues 307 to 324 (QQNLLFEGMGGVDALGST). The helical transmembrane segment at 325-345 (LVSVAGAGFAVVCAFIATLML) threads the bilayer. Over 346-352 (AKWKNIS) the chain is Cytoplasmic. A helical membrane pass occupies residues 353-373 (ALTAIFWTLPALVGSIAAAAL). Topologically, residues 374-378 (PWDNK) are lumenal. The helical transmembrane segment at 379–399 (IGILANICMAGQIFGIPFIIA) threads the bilayer. Topologically, residues 400 to 413 (LSWASSSASGYTKK) are cytoplasmic. A helical transmembrane segment spans residues 414 to 436 (LTRSSVSLFAMGIANIISPQIWR). Topologically, residues 437–447 (EKDSPRFLPAW) are lumenal. The helical transmembrane segment at 448–468 (IVQIVLSFSLAPAILLLIHFI) threads the bilayer. Residues 469-498 (LKRRNNQRLKNYDENLQNYLDRIQLIESEN) adopt a coiled-coil conformation. Residues 469–531 (LKRRNNQRLK…LENETFIYPL (63 aa)) are Cytoplasmic-facing. Phosphoserine is present on residues Ser-500 and Ser-501.

It belongs to the major facilitator superfamily. Allantoate permease family.

The protein localises to the cell membrane. Its subcellular location is the endoplasmic reticulum membrane. In terms of biological role, high affinity cysteine-specific transporter. Major contributor to cysteine transport when cysteine, at low concentrations, is provided as the sole sulfur source. The polypeptide is High affinity cysteine transporter (YCT1) (Saccharomyces cerevisiae (strain ATCC 204508 / S288c) (Baker's yeast)).